The following is a 291-amino-acid chain: Diaminopimelate epimerase (291 aa).

Residues Asn-17, Gln-50, and Asn-70 each coordinate substrate. Residue Cys-79 is the Proton donor of the active site. Residues 80–81 (GN), Asn-167, Asn-200, and 218–219 (ER) contribute to the substrate site. Cys-227 (proton acceptor) is an active-site residue. A substrate-binding site is contributed by 228 to 229 (GS).

Belongs to the diaminopimelate epimerase family. Homodimer.

It localises to the cytoplasm. It catalyses the reaction (2S,6S)-2,6-diaminopimelate = meso-2,6-diaminopimelate. It functions in the pathway amino-acid biosynthesis; L-lysine biosynthesis via DAP pathway; DL-2,6-diaminopimelate from LL-2,6-diaminopimelate: step 1/1. In terms of biological role, catalyzes the stereoinversion of LL-2,6-diaminopimelate (L,L-DAP) to meso-diaminopimelate (meso-DAP), a precursor of L-lysine and an essential component of the bacterial peptidoglycan. The polypeptide is Diaminopimelate epimerase (Bradyrhizobium diazoefficiens (strain JCM 10833 / BCRC 13528 / IAM 13628 / NBRC 14792 / USDA 110)).